Here is an 858-residue protein sequence, read N- to C-terminus: DNA mismatch repair protein MutS (858 aa).

613–620 (GPNMAGKS) is a binding site for ATP.

It belongs to the DNA mismatch repair MutS family.

Functionally, this protein is involved in the repair of mismatches in DNA. It is possible that it carries out the mismatch recognition step. This protein has a weak ATPase activity. This chain is DNA mismatch repair protein MutS, found in Dehalococcoides mccartyi (strain CBDB1).